Reading from the N-terminus, the 245-residue chain is Probable metal transport system ATP-binding protein CPn_0542/CP_0210/CPj0542/CpB0563 (245 aa).

The ABC transporter domain occupies 5–240; it reads ILAEGLAFRY…CCHPYKNQEF (236 aa). An ATP-binding site is contributed by 39 to 46; the sequence is GPNGGGKS.

This sequence belongs to the ABC transporter superfamily.

It localises to the cell inner membrane. Part of an ATP-driven transport system CPn0541/CPn0542/CPn0543 for a metal. Probably responsible for energy coupling to the transport system. This chain is Probable metal transport system ATP-binding protein CPn_0542/CP_0210/CPj0542/CpB0563, found in Chlamydia pneumoniae (Chlamydophila pneumoniae).